Here is a 346-residue protein sequence, read N- to C-terminus: Elongation factor Ts (346 aa).

The tract at residues 80 to 83 (TDFV) is involved in Mg(2+) ion dislocation from EF-Tu.

Belongs to the EF-Ts family.

It is found in the cytoplasm. In terms of biological role, associates with the EF-Tu.GDP complex and induces the exchange of GDP to GTP. It remains bound to the aminoacyl-tRNA.EF-Tu.GTP complex up to the GTP hydrolysis stage on the ribosome. The chain is Elongation factor Ts from Streptococcus suis (strain 98HAH33).